A 450-amino-acid polypeptide reads, in one-letter code: 6-phospho-beta-glucosidase (450 aa).

Leucine 5–aspartate 73 is a binding site for NAD(+). Substrate is bound by residues arginine 96 and asparagine 150. 2 residues coordinate Mn(2+): cysteine 172 and histidine 203. Tyrosine 258 (proton acceptor) is an active-site residue.

In terms of assembly, homotetramer. NAD(+) serves as cofactor. It depends on Mn(2+) as a cofactor. Requires Co(2+) as cofactor. The cofactor is Ni(2+).

The catalysed reaction is 6-phospho-beta-D-glucosyl-(1-&gt;4)-D-glucose + H2O = D-glucose 6-phosphate + D-glucose. In terms of biological role, hydrolyzes a wide variety of P-beta-glucosides including cellobiose-6P, salicin-6P, arbutin-6P, gentiobiose-6P, methyl-beta-glucoside-6P and p-nitrophenyl-beta-D-glucopyranoside-6P. Is also able to hydrolyze phospho-N,N'-diacetylchitobiose. This is 6-phospho-beta-glucosidase (chbF) from Escherichia coli (strain K12).